Consider the following 430-residue polypeptide: GTPase Obg (430 aa).

Positions 1–158 (MFVDQVKISL…LDVSLELKLL (158 aa)) constitute an Obg domain. The disordered stretch occupies residues 118 to 145 (KGGRGGRGNSRFATPRNPAPDFSEKGEP). Residues 159–329 (ADVGLVGFPS…LLYAIADKLE (171 aa)) form the OBG-type G domain. GTP is bound by residues 165 to 172 (GFPSVGKS), 190 to 194 (FTTIK), 212 to 215 (DLPG), 282 to 285 (NKMD), and 310 to 312 (STI). S172 and T192 together coordinate Mg(2+). Positions 352-430 (KHTPSQDKFT…ILGGEFEFVE (79 aa)) constitute an OCT domain.

This sequence belongs to the TRAFAC class OBG-HflX-like GTPase superfamily. OBG GTPase family. As to quaternary structure, monomer. Requires Mg(2+) as cofactor.

The protein localises to the cytoplasm. An essential GTPase which binds GTP, GDP and possibly (p)ppGpp with moderate affinity, with high nucleotide exchange rates and a fairly low GTP hydrolysis rate. Plays a role in control of the cell cycle, stress response, ribosome biogenesis and in those bacteria that undergo differentiation, in morphogenesis control. In Staphylococcus aureus (strain COL), this protein is GTPase Obg.